Here is a 78-residue protein sequence, read N- to C-terminus: Putative membrane protein insertion efficiency factor (78 aa).

It belongs to the UPF0161 family.

Its subcellular location is the cell membrane. Functionally, could be involved in insertion of integral membrane proteins into the membrane. This chain is Putative membrane protein insertion efficiency factor, found in Bacillus thuringiensis subsp. konkukian (strain 97-27).